A 256-amino-acid chain; its full sequence is Imidazole glycerol phosphate synthase subunit HisF (256 aa).

Catalysis depends on residues D12 and D131.

The protein belongs to the HisA/HisF family. In terms of assembly, heterodimer of HisH and HisF.

It is found in the cytoplasm. The catalysed reaction is 5-[(5-phospho-1-deoxy-D-ribulos-1-ylimino)methylamino]-1-(5-phospho-beta-D-ribosyl)imidazole-4-carboxamide + L-glutamine = D-erythro-1-(imidazol-4-yl)glycerol 3-phosphate + 5-amino-1-(5-phospho-beta-D-ribosyl)imidazole-4-carboxamide + L-glutamate + H(+). It participates in amino-acid biosynthesis; L-histidine biosynthesis; L-histidine from 5-phospho-alpha-D-ribose 1-diphosphate: step 5/9. IGPS catalyzes the conversion of PRFAR and glutamine to IGP, AICAR and glutamate. The HisF subunit catalyzes the cyclization activity that produces IGP and AICAR from PRFAR using the ammonia provided by the HisH subunit. This is Imidazole glycerol phosphate synthase subunit HisF from Pseudomonas fluorescens (strain Pf0-1).